Consider the following 105-residue polypeptide: Flexible cuticle protein 12 (105 aa).

The N-terminal stretch at 1 to 16 (MKSFVVVALLVAVAAA) is a signal peptide. In terms of domain architecture, Chitin-binding type R&amp;R spans 37 to 105 (VEGFQYGYET…KPVGAHIPVA (69 aa)).

The sequence is that of Flexible cuticle protein 12 (CP12) from Hyalophora cecropia (Cecropia moth).